Here is a 431-residue protein sequence, read N- to C-terminus: Serine/threonine-protein kinase Sgk1 (431 aa).

The segment at 1–60 is necessary for localization to the mitochondria; it reads MTVKTEAARGPLTYSRMRGMVAILIAFMKQRRMGLNDFIQKIANNSYACKHTEVQSILKI. The tract at residues 66 to 92 is disordered; it reads PELMNANPSPPPSPSQQINLGPSSNPH. A Phosphoserine modification is found at S74. The residue at position 78 (S78) is a Phosphoserine; by MAPK7. The span at 81–91 shows a compositional bias: polar residues; that stretch reads QQINLGPSSNP. Residues 98–355 form the Protein kinase domain; the sequence is FHFLKVIGKG…FMEIRNHVFF (258 aa). ATP contacts are provided by residues 104–112 and K127; that span reads IGKGSFGKV. A Nuclear localization signal motif is present at residues 131-141; sequence KKAILKKKEEK. D222 functions as the Proton acceptor in the catalytic mechanism. T256 carries the phosphothreonine; by PDPK1 modification. Positions 356 to 431 constitute an AGC-kinase C-terminal domain; it reads SLINWDDLIN…SYAPPMDSFL (76 aa). A Phosphothreonine; by PKA modification is found at T369. Phosphoserine is present on residues S397, S401, and S422.

The protein belongs to the protein kinase superfamily. AGC Ser/Thr protein kinase family. As to quaternary structure, homodimer; disulfide-linked. Forms a trimeric complex with FBXW7 and NOTCH1. Interacts with MAPK3/ERK1, MAPK1/ERK2, MAP2K1/MEK1, MAP2K2/MEK2, NEDD4, NEDD4L, MAPT/TAU, MAPK7, CREB1, SLC9A3R2/NHERF2 and KCNJ1/ROMK1. Associates with the mammalian target of rapamycin complex 2 (mTORC2) via an interaction with MAPKAP1/SIN1. Regulated by phosphorylation. Activated by phosphorylation on Ser-422 by mTORC2, transforming it into a substrate for PDPK1 which phosphorylates it on Thr-256. Phosphorylation on Ser-397 and Ser-401 are also essential for its activity. Phosphorylation on Ser-78 by MAPK7 is required for growth factor-induced cell cycle progression. Post-translationally, ubiquitinated by NEDD4L; which promotes proteasomal degradation. Ubiquitinated by SYVN1 at the endoplasmic reticulum; which promotes rapid proteasomal degradation and maintains a high turnover rate in resting cells.

Its subcellular location is the cytoplasm. It is found in the nucleus. The protein resides in the endoplasmic reticulum membrane. It localises to the cell membrane. The protein localises to the mitochondrion. It catalyses the reaction L-seryl-[protein] + ATP = O-phospho-L-seryl-[protein] + ADP + H(+). The catalysed reaction is L-threonyl-[protein] + ATP = O-phospho-L-threonyl-[protein] + ADP + H(+). With respect to regulation, two specific sites, one in the kinase domain (Thr-256) and the other in the C-terminal regulatory region (Ser-422), need to be phosphorylated for its full activation. Phosphorylation at Ser-397 and Ser-401 are also essential for its activity. Activated by WNK1, WNK2, WNK3 and WNK4; which promote phosphorylation by mTORC2. Its function is as follows. Serine/threonine-protein kinase which is involved in the regulation of a wide variety of ion channels, membrane transporters, cellular enzymes, transcription factors, neuronal excitability, cell growth, proliferation, survival, migration and apoptosis. Plays an important role in cellular stress response. Contributes to regulation of renal Na(+) retention, renal K(+) elimination, salt appetite, gastric acid secretion, intestinal Na(+)/H(+) exchange and nutrient transport, insulin-dependent salt sensitivity of blood pressure, salt sensitivity of peripheral glucose uptake, cardiac repolarization and memory consolidation. Up-regulates Na(+) channels: SCNN1A/ENAC, SCN5A and ASIC1/ACCN2, K(+) channels: KCNJ1/ROMK1, KCNA1-5, KCNQ1-5 and KCNE1, epithelial Ca(2+) channels: TRPV5 and TRPV6, chloride channels: BSND, CLCN2 and CFTR, glutamate transporters: SLC1A3/EAAT1, SLC1A2 /EAAT2, SLC1A1/EAAT3, SLC1A6/EAAT4 and SLC1A7/EAAT5, amino acid transporters: SLC1A5/ASCT2, SLC38A1/SN1 and SLC6A19, creatine transporter: SLC6A8, Na(+)/dicarboxylate cotransporter: SLC13A2/NADC1, Na(+)-dependent phosphate cotransporter: SLC34A2/NAPI-2B, glutamate receptor: GRIK2/GLUR6. Up-regulates carriers: SLC9A3/NHE3, SLC12A1/NKCC2, SLC12A3/NCC, SLC5A3/SMIT, SLC2A1/GLUT1, SLC5A1/SGLT1 and SLC15A2/PEPT2. Regulates enzymes: GSK3A/B, PMM2 and Na(+)/K(+) ATPase, and transcription factors: CTNNB1 and nuclear factor NF-kappa-B. Stimulates sodium transport into epithelial cells by enhancing the stability and expression of SCNN1A/ENAC. This is achieved by phosphorylating the NEDD4L ubiquitin E3 ligase, promoting its interaction with 14-3-3 proteins, thereby preventing it from binding to SCNN1A/ENAC and targeting it for degradation. Regulates store-operated Ca(+2) entry (SOCE) by stimulating ORAI1 and STIM1. Regulates KCNJ1/ROMK1 directly via its phosphorylation or indirectly via increased interaction with SLC9A3R2/NHERF2. Phosphorylates MDM2 and activates MDM2-dependent ubiquitination of p53/TP53. Phosphorylates MAPT/TAU and mediates microtubule depolymerization and neurite formation in hippocampal neurons. Phosphorylates SLC2A4/GLUT4 and up-regulates its activity. Phosphorylates APBB1/FE65 and promotes its localization to the nucleus. Phosphorylates MAPK1/ERK2 and activates it by enhancing its interaction with MAP2K1/MEK1 and MAP2K2/MEK2. Phosphorylates FBXW7 and plays an inhibitory role in the NOTCH1 signaling. Phosphorylates FOXO1 resulting in its relocalization from the nucleus to the cytoplasm. Phosphorylates FOXO3, promoting its exit from the nucleus and interference with FOXO3-dependent transcription. Phosphorylates BRAF and MAP3K3/MEKK3 and inhibits their activity. Phosphorylates SLC9A3/NHE3 in response to dexamethasone, resulting in its activation and increased localization at the cell membrane. Phosphorylates CREB1. Necessary for vascular remodeling during angiogenesis. This Oryctolagus cuniculus (Rabbit) protein is Serine/threonine-protein kinase Sgk1 (SGK1).